Here is a 384-residue protein sequence, read N- to C-terminus: Probable circularly permuted 1,3-beta-glucanase PGA52 (384 aa).

The N-terminal stretch at 1–17 is a signal peptide; that stretch reads MLFSSLLVSTLVSVATA. Asn-118, Asn-128, Asn-170, Asn-210, and Asn-244 each carry an N-linked (GlcNAc...) asparagine glycan. Positions 254 to 259 match the ExDxxE motif motif; it reads EFDIFE. Asn-262 and Asn-318 each carry an N-linked (GlcNAc...) asparagine glycan. Ser-361 carries the GPI-anchor amidated serine lipid modification. Positions 362-384 are cleaved as a propeptide — removed in mature form; the sequence is GGVSYQPSFITNLLMTVLTLWVI.

This sequence belongs to the PGA52 family.

Its subcellular location is the cell membrane. It catalyses the reaction Hydrolysis of (1-&gt;3)-beta-D-glucosidic linkages in (1-&gt;3)-beta-D-glucans.. Functionally, probable circularly permuted 1,3-beta-glucanase involved in cell wall modification through beta-1,3-glucan network alterations such as increased branching or remodeling. In Candida albicans (strain SC5314 / ATCC MYA-2876) (Yeast), this protein is Probable circularly permuted 1,3-beta-glucanase PGA52 (PGA52).